A 95-amino-acid polypeptide reads, in one-letter code: uncharacterized protein (95 aa).

Positions 2-92 (VREAAMLHIK…YTPFPTVEHF (91 aa)) constitute an ABM domain.

This is an uncharacterized protein from Bacillus subtilis (strain 168).